We begin with the raw amino-acid sequence, 291 residues long: uncharacterized protein (291 aa).

This is an uncharacterized protein from Acanthamoeba polyphaga mimivirus (APMV).